Consider the following 65-residue polypeptide: Large ribosomal subunit protein bL35 (65 aa).

It belongs to the bacterial ribosomal protein bL35 family.

The sequence is that of Large ribosomal subunit protein bL35 from Acaryochloris marina (strain MBIC 11017).